Here is a 120-residue protein sequence, read N- to C-terminus: U13-lycotoxin-Ls1f (120 aa).

A signal peptide spans Met1–Cys16. Residues Phe17 to Arg54 constitute a propeptide that is removed on maturation. Intrachain disulfides connect Cys56-Cys70, Cys63-Cys76, Cys69-Cys87, and Cys78-Cys85. Residues Cys56–Cys95 enclose the Agouti domain.

Belongs to the neurotoxin 05 (agouti) family. Contains 6 disulfide bonds. As to expression, expressed by the venom gland.

The protein resides in the secreted. This Lycosa singoriensis (Wolf spider) protein is U13-lycotoxin-Ls1f.